The primary structure comprises 349 residues: Protein RecA (349 aa).

65–72 provides a ligand contact to ATP; the sequence is GPESSGKT.

It belongs to the RecA family.

The protein resides in the cytoplasm. In terms of biological role, can catalyze the hydrolysis of ATP in the presence of single-stranded DNA, the ATP-dependent uptake of single-stranded DNA by duplex DNA, and the ATP-dependent hybridization of homologous single-stranded DNAs. It interacts with LexA causing its activation and leading to its autocatalytic cleavage. This Enterococcus faecium (Streptococcus faecium) protein is Protein RecA.